The sequence spans 400 residues: CinA-like protein (400 aa).

It belongs to the CinA family.

The sequence is that of CinA-like protein from Sulfurihydrogenibium sp. (strain YO3AOP1).